The chain runs to 192 residues: MTRMLIIGPPGSGKGTQAERISERLGVVAISTGDIFRANVKGETPLGIEAKKYMDNGDFVPDSVTNKMVRDRLSESDVESGFLLDGYPRTTAQVDYLDEILAKNEEKLDVVLQLTADDEELVHRLLGRAKETGRSDDNEAVIRHRLDLYHEQTEAVVAKYAERGILTQVDGIGPIDEVTDRVMQAIKAAQAA.

Residue 11 to 16 (GSGKGT) participates in ATP binding. The NMP stretch occupies residues 31–60 (STGDIFRANVKGETPLGIEAKKYMDNGDFV). AMP contacts are provided by residues threonine 32, arginine 37, 58–60 (DFV), 86–89 (GYPR), and glutamine 93. An LID region spans residues 127–137 (GRAKETGRSDD). An ATP-binding site is contributed by arginine 128. AMP contacts are provided by arginine 134 and arginine 145. Residue glycine 173 coordinates ATP.

It belongs to the adenylate kinase family. In terms of assembly, monomer.

The protein resides in the cytoplasm. It catalyses the reaction AMP + ATP = 2 ADP. It functions in the pathway purine metabolism; AMP biosynthesis via salvage pathway; AMP from ADP: step 1/1. Its function is as follows. Catalyzes the reversible transfer of the terminal phosphate group between ATP and AMP. Plays an important role in cellular energy homeostasis and in adenine nucleotide metabolism. This is Adenylate kinase from Pseudarthrobacter chlorophenolicus (strain ATCC 700700 / DSM 12829 / CIP 107037 / JCM 12360 / KCTC 9906 / NCIMB 13794 / A6) (Arthrobacter chlorophenolicus).